The sequence spans 902 residues: Transcription factor FPSE_08121 (902 aa).

A disordered region spans residues 1–47; the sequence is MVSPDNRPGTQGPSASAHAHDSRVPRKRPGSWDNNPSTAGNRAVKKR. A DNA-binding region (zn(2)-C6 fungal-type) is located at residues 52 to 81; that stretch reads CVSCRDRKVRCDVVNGGPPCTNCRLDDVDC. Disordered stretches follow at residues 92 to 189, 208 to 234, 258 to 277, and 820 to 839; these read NPAR…EAEQ, HCEQ…PANP, ATEA…SANT, and TGVA…PNMT. Over residues 120 to 137 the composition is skewed to low complexity; the sequence is TDADTAAPGPAPGSASAT. The span at 168-177 shows a compositional bias: acidic residues; sequence ETICDDDENE. Composition is skewed to polar residues over residues 178–187, 220–234, 262–277, and 826–839; these read NNSWHNQQEA, GAAT…PANP, PPSS…SANT, and GQRS…PNMT.

It localises to the nucleus. Its function is as follows. Transcription factor; part of the Fusarium detoxification of benzoxazolinone cluster involved in the degradation of benzoxazolinones produced by the host plant. Maize, wheat, and rye produce the 2 benzoxazinone phytoanticipins 2,4-dihy-droxy-7-methoxy-1,4-benzoxazin-3-one (DIMBOA) and 2,4-dihydroxy-1,4-benzoxazin-3-one (DIBOA) that, due to their inherent instability once released, spontaneously degrade to the more stable corresponding benzoxazolinones, 6-methoxy-2-benzoxazolinone (MBOA) and 2-benzoxazolinone (BOA), respectively. FPSE_08121 positively regulates the expression of the FBD cluster gene FPSE_08120 in response to 2-aminophenol (2-AP) treatment and contributes quantitatively to benzoxazolinone tolerance. The sequence is that of Transcription factor FPSE_08121 from Fusarium pseudograminearum (strain CS3096) (Wheat and barley crown-rot fungus).